A 240-amino-acid chain; its full sequence is Adenosine 5'-phosphosulfate reductase (240 aa).

[4Fe-4S] cluster-binding residues include Cys-125, Cys-126, Cys-208, and Cys-211. The Nucleophile; cysteine thiosulfonate intermediate role is filled by Cys-234.

Belongs to the PAPS reductase family. CysH subfamily. The cofactor is [4Fe-4S] cluster.

Its subcellular location is the cytoplasm. The enzyme catalyses [thioredoxin]-disulfide + sulfite + AMP + 2 H(+) = adenosine 5'-phosphosulfate + [thioredoxin]-dithiol. Its pathway is sulfur metabolism; hydrogen sulfide biosynthesis; sulfite from sulfate. Its function is as follows. Catalyzes the formation of sulfite from adenosine 5'-phosphosulfate (APS) using thioredoxin as an electron donor. This is Adenosine 5'-phosphosulfate reductase from Oceanobacillus iheyensis (strain DSM 14371 / CIP 107618 / JCM 11309 / KCTC 3954 / HTE831).